A 373-amino-acid polypeptide reads, in one-letter code: Queuine tRNA-ribosyltransferase (373 aa).

Aspartate 93 serves as the catalytic Proton acceptor. Residues 93 to 97 (DSGGF), aspartate 147, glutamine 190, and glycine 219 each bind substrate. Positions 250-256 (GVGEPVD) are RNA binding. The Nucleophile role is filled by aspartate 269. Positions 274–278 (TRLAR) are RNA binding; important for wobble base 34 recognition. The Zn(2+) site is built by cysteine 307, cysteine 309, cysteine 312, and histidine 338.

This sequence belongs to the queuine tRNA-ribosyltransferase family. As to quaternary structure, homodimer. Within each dimer, one monomer is responsible for RNA recognition and catalysis, while the other monomer binds to the replacement base PreQ1. It depends on Zn(2+) as a cofactor.

It catalyses the reaction 7-aminomethyl-7-carbaguanine + guanosine(34) in tRNA = 7-aminomethyl-7-carbaguanosine(34) in tRNA + guanine. It functions in the pathway tRNA modification; tRNA-queuosine biosynthesis. Its function is as follows. Catalyzes the base-exchange of a guanine (G) residue with the queuine precursor 7-aminomethyl-7-deazaguanine (PreQ1) at position 34 (anticodon wobble position) in tRNAs with GU(N) anticodons (tRNA-Asp, -Asn, -His and -Tyr). Catalysis occurs through a double-displacement mechanism. The nucleophile active site attacks the C1' of nucleotide 34 to detach the guanine base from the RNA, forming a covalent enzyme-RNA intermediate. The proton acceptor active site deprotonates the incoming PreQ1, allowing a nucleophilic attack on the C1' of the ribose to form the product. After dissociation, two additional enzymatic reactions on the tRNA convert PreQ1 to queuine (Q), resulting in the hypermodified nucleoside queuosine (7-(((4,5-cis-dihydroxy-2-cyclopenten-1-yl)amino)methyl)-7-deazaguanosine). In Fusobacterium nucleatum subsp. nucleatum (strain ATCC 25586 / DSM 15643 / BCRC 10681 / CIP 101130 / JCM 8532 / KCTC 2640 / LMG 13131 / VPI 4355), this protein is Queuine tRNA-ribosyltransferase.